Here is a 1310-residue protein sequence, read N- to C-terminus: Zinc finger protein 521 (1310 aa).

Residues 1–10 (MSRRKQAKPR) show a composition bias toward basic residues. Positions 1–46 (MSRRKQAKPRSLKDPNCKLEDTSEDGESPDCKKRQEEGDELEEEEA) are disordered. Basic and acidic residues predominate over residues 11–21 (SLKDPNCKLED). The C2H2-type 1; degenerate zinc finger occupies 48–68 (HSCDSCLQVFESLSDITEHKI). Residues 82–106 (DPTCSWPASSPSSKDQASPIHGEGF) form a disordered region. Polar residues predominate over residues 87 to 97 (WPASSPSSKDQ). 7 consecutive C2H2-type zinc fingers follow at residues 119–141 (YPCQ…EQSH), 147–169 (FKCT…IKLH), 175–197 (YHCS…LKTH), 203–225 (YKCA…MQVH), 247–270 (QKCS…AECH), 282–305 (LQCM…EQIH), and 311–333 (NSCN…MDSH). The C2H2-type 9; degenerate zinc-finger motif lies at 404–428 (YSCIYCSKQLFSSLAVLQIHLKTMH). 3 consecutive C2H2-type zinc fingers follow at residues 436-459 (HICQ…KQVH), 476-499 (YQCN…RSSH), and 512-535 (FFCP…RQVH). The C2H2-type 13; atypical zinc finger occupies 559-584 (YSCSYCTNSPIFNSVLKLNKHIKENH). C2H2-type zinc fingers lie at residues 633 to 655 (YICN…LKTH), 663 to 685 (LTCP…VTIH), 693 to 716 (YICE…LDMH), 721 to 744 (FRCT…AVKH), 751 to 774 (YRCT…KHNH), 782 to 804 (HKCI…ITTH), and 808 to 831 (YNCK…REKH). The C2H2-type 21; degenerate zinc finger occupies 885 to 907 (YGCDICGAAYTMESLLQNHQLRD). C2H2-type zinc fingers lie at residues 929–951 (YKCN…MQTH), 958–980 (YMCP…KVTH), and 1019–1041 (FRCV…GTFH). Residues 1064 to 1082 (YKCASCLKEFRSKQDLVKL) form a C2H2-type 25; degenerate zinc finger. 5 consecutive C2H2-type zinc fingers follow at residues 1138-1161 (TRCS…QTIH), 1194-1216 (YQCI…VANH), 1224-1246 (HECK…LIEH), 1255-1278 (FKCP…FSAH), and 1285-1308 (YDCA…MSQH).

The protein belongs to the krueppel C2H2-type zinc-finger protein family.

It localises to the nucleus. Transcription factor that can both act as an activator or a repressor depending on the context. Involved in BMP signaling and in the regulation of the immature compartment of the hematopoietic system. The protein is Zinc finger protein 521 (znf521) of Xenopus laevis (African clawed frog).